A 105-amino-acid chain; its full sequence is NADH-quinone oxidoreductase subunit K (105 aa).

A run of 3 helical transmembrane segments spans residues 4–24, 28–48, and 66–86; these read LTHY…GVIV, IIVI…SLVA, and LSIF…ALIV.

The protein belongs to the complex I subunit 4L family. As to quaternary structure, NDH-1 is composed of 14 different subunits. Subunits NuoA, H, J, K, L, M, N constitute the membrane sector of the complex.

The protein resides in the cell inner membrane. It catalyses the reaction a quinone + NADH + 5 H(+)(in) = a quinol + NAD(+) + 4 H(+)(out). Its function is as follows. NDH-1 shuttles electrons from NADH, via FMN and iron-sulfur (Fe-S) centers, to quinones in the respiratory chain. The immediate electron acceptor for the enzyme in this species is believed to be ubiquinone. Couples the redox reaction to proton translocation (for every two electrons transferred, four hydrogen ions are translocated across the cytoplasmic membrane), and thus conserves the redox energy in a proton gradient. The polypeptide is NADH-quinone oxidoreductase subunit K (Akkermansia muciniphila (strain ATCC BAA-835 / DSM 22959 / JCM 33894 / BCRC 81048 / CCUG 64013 / CIP 107961 / Muc)).